Here is a 757-residue protein sequence, read N- to C-terminus: RNA-directed RNA polymerase catalytic subunit (757 aa).

A disordered region spans residues 52 to 82 (RGKWTTNTETGAPQLNPIDGPLPEDNEPSGY). The span at 55–64 (WTTNTETGAP) shows a compositional bias: polar residues. 2 consecutive short sequence motifs (nuclear localization signal) follow at residues 187-195 (RKRRVRDNM) and 203-216 (RTIG…NKRS). Positions 249 to 256 (RGFVYFVE) are promoter-binding site. The region spanning 286-483 (VRKMMTNSQD…GINMSKKKSY (198 aa)) is the RdRp catalytic domain.

This sequence belongs to the influenza viruses polymerase PB1 family. Influenza RNA polymerase is composed of three subunits: PB1, PB2 and PA. Interacts (via N-terminus) with PA (via C-terminus). Interacts (via C-terminus) with PB2 (via N-terminus); this interaction is essential for transcription initiation. Phosphorylated by host PRKCA.

The protein localises to the host nucleus. It localises to the host cytoplasm. It carries out the reaction RNA(n) + a ribonucleoside 5'-triphosphate = RNA(n+1) + diphosphate. Its function is as follows. RNA-dependent RNA polymerase which is responsible for replication and transcription of virus RNA segments. The transcription of viral mRNAs occurs by a unique mechanism called cap-snatching. 5' methylated caps of cellular mRNAs are cleaved after 10-13 nucleotides by PA. In turn, these short capped RNAs are used as primers by PB1 for transcription of viral mRNAs. During virus replication, PB1 initiates RNA synthesis and copy vRNA into complementary RNA (cRNA) which in turn serves as a template for the production of more vRNAs. The sequence is that of RNA-directed RNA polymerase catalytic subunit from Influenza A virus (strain A/Kitakyushu/159/1993 H3N2).